A 397-amino-acid chain; its full sequence is MNIKEVDVLIIGAGPAGSLAAREASKNGAKTLIIDKKSEIGTPKRCAEGIMSGVLERVHITPDERWIARKIDGARIVSPNNTSAWFTPETLETPATGIILERKVFDKHMTMDAIREGAEVMIKTEALSMKREGDGYLVDIKSFNKEYNQIKAHIVIGADGPEGHVARWAELNTKVPLAEMESGLQYEMTNLKMKNNSVIQFFFGSVAPGGYAWIFPKGYDTANVGIDISGIKAEKSAVKYLNDFIANCDETKDGQIVEINAGGNPLCGIFDKIITDNVMLVGDAAGCVSPITGGGIDTALESGMIAGRVAAKAIKNRDYSEEKLQEYADYIDSHLGKKFKKYIAIRDVLYNSSDEDLDEYITALANANITKLSTKSLIKVVMKISPRKLFKLRKILL.

Residues alanine 16, aspartate 35, cysteine 46, alanine 47, glycine 49, arginine 102, alanine 126, aspartate 283, glycine 295, and isoleucine 296 each coordinate FAD. Lysine 338 contributes to the a 2,3-bis-O-(geranylgeranyl)-sn-glycerol 1-phospholipid binding site.

It belongs to the geranylgeranyl reductase family. DGGGPL reductase subfamily. FAD serves as cofactor.

The catalysed reaction is a 2,3-bis-O-phytanyl-sn-glycerol 1-phospholipid + 8 A = a 2,3-bis-O-(geranylgeranyl)-sn-glycerol 1-phospholipid + 8 AH2. It carries out the reaction 2,3-bis-O-(phytanyl)-sn-glycerol 1-phosphate + 8 A = 2,3-bis-O-(geranylgeranyl)-sn-glycerol 1-phosphate + 8 AH2. It catalyses the reaction CDP-2,3-bis-O-(geranylgeranyl)-sn-glycerol + 8 AH2 = CDP-2,3-bis-O-(phytanyl)-sn-glycerol + 8 A. The enzyme catalyses archaetidylserine + 8 AH2 = 2,3-bis-O-phytanyl-sn-glycero-3-phospho-L-serine + 8 A. It participates in membrane lipid metabolism; glycerophospholipid metabolism. Functionally, is involved in the reduction of 2,3-digeranylgeranylglycerophospholipids (unsaturated archaeols) into 2,3-diphytanylglycerophospholipids (saturated archaeols) in the biosynthesis of archaeal membrane lipids. Catalyzes the formation of archaetidic acid (2,3-di-O-phytanyl-sn-glyceryl phosphate) from 2,3-di-O-geranylgeranylglyceryl phosphate (DGGGP) via the hydrogenation of each double bond of the isoprenoid chains. Is also probably able to reduce double bonds of geranyl groups in CDP-2,3-bis-O-(geranylgeranyl)-sn-glycerol and archaetidylserine, thus acting at various stages in the biosynthesis of archaeal membrane lipids. The chain is Digeranylgeranylglycerophospholipid reductase 3 from Methanosphaera stadtmanae (strain ATCC 43021 / DSM 3091 / JCM 11832 / MCB-3).